The following is a 314-amino-acid chain: Olfactory receptor 1E1 (314 aa).

Topologically, residues 1-25 are extracellular; sequence MMGQNQTSISDFLLLGLPIQPEQQN. N-linked (GlcNAc...) asparagine glycosylation occurs at N5. The helical transmembrane segment at 26 to 49 threads the bilayer; sequence LCYALFLAMYLTTLLGNLLIIVLI. Topologically, residues 50 to 57 are cytoplasmic; sequence RLDSHLHT. A helical transmembrane segment spans residues 58-79; sequence PMYLFLSNLSFSDLCFSSVTIP. Residues 80–100 are Extracellular-facing; that stretch reads KLLQNMQNQDPSIPYADCLTQ. Residues 101-120 traverse the membrane as a helical segment; the sequence is MYFFLLFGDLESFLLVAMAY. Over 121-139 the chain is Cytoplasmic; that stretch reads DRYVAICFPLHYTAIMSPM. Residues 140-158 traverse the membrane as a helical segment; it reads LCLALVALSWVLTTFHAML. At 159–195 the chain is on the extracellular side; it reads HTLLMARLCFCADNVIPHFFCDMSALLKLAFSDTRVN. Residues 196 to 219 form a helical membrane-spanning segment; the sequence is EWVIFIMGGLILVIPFLLILGSYA. Over 220-236 the chain is Cytoplasmic; it reads RIVSSILKVPSSKGICK. The chain crosses the membrane as a helical span at residues 237–259; that stretch reads AFSTCGSHLSVVSLFYGTVIGLY. Residues 260 to 272 are Extracellular-facing; that stretch reads LCSSANSSTLKDT. Residues 273 to 292 form a helical membrane-spanning segment; it reads VMAMMYTVVTPMLNPFIYSL. Over 293-314 the chain is Cytoplasmic; that stretch reads RNRDMKGALSRVIHQKKTFFSL.

Belongs to the G-protein coupled receptor 1 family.

It is found in the cell membrane. Odorant receptor. The sequence is that of Olfactory receptor 1E1 (OR1E1) from Homo sapiens (Human).